The sequence spans 78 residues: Small venom protein 2 (78 aa).

Positions 1-19 are cleaved as a signal peptide; it reads MKFIVLLGALLALLVAVSA. Positions 20–42 are excised as a propeptide; sequence DRIAREAPEMESVDEAVLTRQAR.

Expressed by the venom gland.

It is found in the secreted. This is Small venom protein 2 from Pimpla hypochondriaca (Parasitoid wasp).